The chain runs to 257 residues: Glucose-1-phosphate cytidylyltransferase (257 aa).

Substrate-binding positions include 6–10 (LAGGL), 11–13 (GTR), lysine 23, serine 104, arginine 109, and glycine 128. Residues aspartate 129 and aspartate 234 each coordinate Mg(2+).

It belongs to the glucose-1-phosphate cytidylyltransferase family. Homohexamer. It depends on Mg(2+) as a cofactor.

The catalysed reaction is alpha-D-glucose 1-phosphate + CTP + H(+) = CDP-D-glucose + diphosphate. It functions in the pathway nucleotide-sugar biosynthesis; CDP-3,6-dideoxy-D-mannose biosynthesis; CDP-3,6-dideoxy-D-mannose from CTP and alpha-D-glucose 1-phosphate: step 1/5. It participates in bacterial outer membrane biogenesis; LPS O-antigen biosynthesis. Involved in the biosynthesis of the tyvelose, a 3,6-dideoxyhexose found in the O-antigen of the surface lipopolysaccharides. It catalyzes the transfer of a CMP moiety from CTP to glucose 1-phosphate. This enzyme can utilize either CTP or UTP as the nucleotide donor. The chain is Glucose-1-phosphate cytidylyltransferase (rfbF) from Salmonella typhi.